Reading from the N-terminus, the 270-residue chain is Phthiotriol/phenolphthiotriol dimycocerosates methyltransferase (270 aa).

Belongs to the methyltransferase superfamily. Phthiotriol/phenolphthiotriol dimycocerosates methyltransferase family.

Catalyzes the methylation of the lipid moiety of the intermediate compounds phthiotriol and glycosylated phenolphthiotriol dimycoserosates to form phthiocerol dimycocerosates (DIM A) and glycosylated phenolphthiocerol dimycocerosates (PGL). This Mycobacterium bovis (strain ATCC BAA-935 / AF2122/97) protein is Phthiotriol/phenolphthiotriol dimycocerosates methyltransferase.